The sequence spans 631 residues: ATP-dependent DNA helicase 2 subunit 1 (631 aa).

Positions 262–487 (FYLGPNLSMS…VEFFQKIIKK (226 aa)) constitute a Ku domain. The disordered stretch occupies residues 550 to 570 (AEPHKKRAAKSTTAGASGPKM).

Belongs to the ku70 family. In terms of assembly, heterodimer of a 70 kDa and a 80 kDa subunit.

It is found in the nucleus. The protein resides in the chromosome. It carries out the reaction ATP + H2O = ADP + phosphate + H(+). Single-stranded DNA-dependent ATP-dependent helicase. Involved in non-homologous end joining (NHEJ) DNA double strand break repair. Sequence-specific DNA-binding protein that has a high affinity for a 31 bp sequence in the Yp1 gene. Site-specific DNA binding to 31 bp P element inverted repeats. The polypeptide is ATP-dependent DNA helicase 2 subunit 1 (Irbp) (Drosophila melanogaster (Fruit fly)).